Reading from the N-terminus, the 578-residue chain is Translation initiation factor eIF2B subunit gamma (578 aa).

2 positions are modified to phosphoserine: serine 296 and serine 300. Disordered stretches follow at residues 298–337 (QASF…SATS) and 535–578 (DDSV…LFER). A Phosphothreonine modification is found at threonine 306. The span at 544-578 (EIAEETDSDDRSDEDSDDSEYTDEYEYEDDGLFER) shows a compositional bias: acidic residues.

Belongs to the eIF-2B gamma/epsilon subunits family. As to quaternary structure, component of the translation initiation factor 2B (eIF2B) complex which is a heterodecamer of two sets of five different subunits: alpha, beta, gamma, delta and epsilon. Subunits alpha, beta and delta comprise a regulatory subcomplex and subunits epsilon and gamma comprise a catalytic subcomplex. Within the complex, the hexameric regulatory complex resides at the center, with the two heterodimeric catalytic subcomplexes bound on opposite sides.

It localises to the cytoplasm. Its subcellular location is the cytosol. Acts as a component of the translation initiation factor 2B (eIF2B) complex, which catalyzes the exchange of GDP for GTP on the eukaryotic initiation factor 2 (eIF2) complex gamma subunit. Its guanine nucleotide exchange factor activity is repressed when bound to eIF2 complex phosphorylated on the alpha subunit, thereby limiting the amount of methionyl-initiator methionine tRNA available to the ribosome and consequently global translation is repressed. It activates the synthesis of GCN4 in yeast under amino acid starvation conditions by suppressing the inhibitory effects of multiple AUG codons present in the leader of GCN4 mRNA. It may promote either repression or activation of GCN4 expression depending on amino acid availability. GCD1 stabilizes the interaction between eIF2 and GCD6 and stimulates the catalytic activity in vitro. The protein is Translation initiation factor eIF2B subunit gamma (GCD1) of Saccharomyces cerevisiae (strain ATCC 204508 / S288c) (Baker's yeast).